The following is a 275-amino-acid chain: Uroporphyrinogen-III synthase (275 aa).

Belongs to the uroporphyrinogen-III synthase family.

The enzyme catalyses hydroxymethylbilane = uroporphyrinogen III + H2O. It functions in the pathway porphyrin-containing compound metabolism; protoporphyrin-IX biosynthesis; coproporphyrinogen-III from 5-aminolevulinate: step 3/4. Functionally, catalyzes cyclization of the linear tetrapyrrole, hydroxymethylbilane, to the macrocyclic uroporphyrinogen III, the fourth step in the heme biosynthetic pathway. The polypeptide is Uroporphyrinogen-III synthase (Saccharomyces cerevisiae (strain ATCC 204508 / S288c) (Baker's yeast)).